Consider the following 283-residue polypeptide: Bis(5'-nucleosyl)-tetraphosphatase, symmetrical (283 aa).

It belongs to the Ap4A hydrolase family.

The catalysed reaction is P(1),P(4)-bis(5'-adenosyl) tetraphosphate + H2O = 2 ADP + 2 H(+). Its function is as follows. Hydrolyzes diadenosine 5',5'''-P1,P4-tetraphosphate to yield ADP. In Pseudomonas fluorescens (strain SBW25), this protein is Bis(5'-nucleosyl)-tetraphosphatase, symmetrical.